The sequence spans 256 residues: Short chain dehydrogenase adrF (256 aa).

Residues isoleucine 11, aspartate 57, arginine 119, tyrosine 151, lysine 155, and valine 184 each contribute to the NADP(+) site. Tyrosine 151 serves as the catalytic Proton acceptor. Residue lysine 155 is the Lowers pKa of active site Tyr of the active site.

Belongs to the short-chain dehydrogenases/reductases (SDR) family.

Its pathway is secondary metabolite biosynthesis; terpenoid biosynthesis. Its function is as follows. Short chain dehydrogenase; part of the gene cluster that mediates the biosynthesis of andrastins, meroterpenoid compounds that exhibit inhibitory activity against ras farnesyltransferase, suggesting that they could be promising leads for antitumor agents. The first step of the pathway is the synthesis of 3,5-dimethylorsellinic acid (DMOA) by the polyketide synthase adrD via condensation of one acetyl-CoA starter unit with 3 malonyl-CoA units and 2 methylations. DMAO is then converted to farnesyl-DMAO by the prenyltransferase adrG. The methyltransferase adrK catalyzes the methylation of the carboxyl group of farnesyl-DMAO to farnesyl-DMAO methyl ester which is further converted to epoxyfarnesyl-DMAO methyl ester by the FAD-dependent monooxygenase adrH. The terpene cyclase adrI then catalyzes the carbon skeletal rearrangement to generate the andrastin E, the first compound in the pathway having the andrastin scaffold, with the tetracyclic ring system. The post-cyclization tailoring enzymes adrF, adrE, adrJ, and adrA, are involved in the conversion of andrastin E into andrastin A. The short chain dehydrogenase adrF is responsible for the oxidation of the C-3 a hydroxyl group of andrastin E to yield the corresponding ketone, andrastin D. The ketoreductase adrE stereoselectively reduces the carbonyl moiety to reverse the stereochemistry of the C-3 position to yield andrastin F. The acetyltransferase adrJ is the acetyltransferase that attaches the acetyl group to the C-3 hydroxyl group of andrastin F to yield andrastin C. Finally, the cytochrome P450 monooxygenase adrA catalyzes two sequential oxidation reactions of the C-23 methyl group, to generate the corresponding alcohol andrastin B, and aldehyde andrastin A. The protein is Short chain dehydrogenase adrF of Penicillium roqueforti.